A 531-amino-acid polypeptide reads, in one-letter code: Peptide chain release factor 3 (531 aa).

In terms of domain architecture, tr-type G spans 10–278; it reads RRRRTFAIIS…SLIEWAPAPK (269 aa). Residues 19–26, 87–91, and 141–144 contribute to the GTP site; these read SHPDAGKT, DTPGH, and NKYD.

It belongs to the TRAFAC class translation factor GTPase superfamily. Classic translation factor GTPase family. PrfC subfamily.

The protein localises to the cytoplasm. Its function is as follows. Increases the formation of ribosomal termination complexes and stimulates activities of RF-1 and RF-2. It binds guanine nucleotides and has strong preference for UGA stop codons. It may interact directly with the ribosome. The stimulation of RF-1 and RF-2 is significantly reduced by GTP and GDP, but not by GMP. The polypeptide is Peptide chain release factor 3 (Neisseria meningitidis serogroup A / serotype 4A (strain DSM 15465 / Z2491)).